Reading from the N-terminus, the 64-residue chain is Small ribosomal subunit protein bS21 (64 aa).

It belongs to the bacterial ribosomal protein bS21 family.

The protein is Small ribosomal subunit protein bS21 of Karelsulcia muelleri (strain GWSS) (Sulcia muelleri).